The following is a 271-amino-acid chain: Formamidopyrimidine-DNA glycosylase (271 aa).

The active-site Schiff-base intermediate with DNA is the P2. E3 acts as the Proton donor in catalysis. The active-site Proton donor; for beta-elimination activity is the K57. The DNA site is built by H90, R109, and K151. The FPG-type zinc-finger motif lies at 236–270 (HVYGRGGETCTQCGNLLSEIRLGQRTTVFCGICQT). Catalysis depends on R260, which acts as the Proton donor; for delta-elimination activity.

It belongs to the FPG family. Monomer. Zn(2+) serves as cofactor.

The catalysed reaction is Hydrolysis of DNA containing ring-opened 7-methylguanine residues, releasing 2,6-diamino-4-hydroxy-5-(N-methyl)formamidopyrimidine.. It catalyses the reaction 2'-deoxyribonucleotide-(2'-deoxyribose 5'-phosphate)-2'-deoxyribonucleotide-DNA = a 3'-end 2'-deoxyribonucleotide-(2,3-dehydro-2,3-deoxyribose 5'-phosphate)-DNA + a 5'-end 5'-phospho-2'-deoxyribonucleoside-DNA + H(+). In terms of biological role, involved in base excision repair of DNA damaged by oxidation or by mutagenic agents. Acts as a DNA glycosylase that recognizes and removes damaged bases. Has a preference for oxidized purines, such as 7,8-dihydro-8-oxoguanine (8-oxoG). Has AP (apurinic/apyrimidinic) lyase activity and introduces nicks in the DNA strand. Cleaves the DNA backbone by beta-delta elimination to generate a single-strand break at the site of the removed base with both 3'- and 5'-phosphates. The polypeptide is Formamidopyrimidine-DNA glycosylase (Shewanella sp. (strain MR-7)).